Consider the following 754-residue polypeptide: Nibrin (754 aa).

The region spanning 24 to 83 is the FHA domain; the sequence is YVVGRKNCAILIEKDQSISRNHAVLTANFSVTNLSQTDEIPVLALKDNSKYGTFVNEEKM. 2 consecutive BRCT domains span residues 105 to 181 and 224 to 315; these read KFRI…TEFL and GKTF…LAVI. Positions 111 to 328 are mediates interaction with SP100; it reads EPLVACSSCL…TKNYCDPQGH (218 aa). The tract at residues 221–402 is interaction with MTOR, MAPKAP1 and RICTOR; sequence IFKGKTFIFL…FRMLSQDAPT (182 aa). At Ser-278 the chain carries Phosphoserine; by ATM. A disordered region spans residues 326–346; it reads QGHPSTGLKTTTPGPSLSQGL. A compositionally biased stretch (polar residues) spans 328 to 346; the sequence is HPSTGLKTTTPGPSLSQGL. Thr-337 carries the phosphothreonine modification. Ser-343 is modified (phosphoserine; by ATM). Residue Ser-347 is modified to Phosphoserine. The residue at position 388 (Lys-388) is an N6-lactoyllysine. Disordered stretches follow at residues 396-415 and 431-475; these read LSQDAPTVKESCKTSSNNNS and LSPT…NQEM. Position 397 is a phosphoserine (Ser-397). Phosphothreonine is present on Thr-402. 2 stretches are compositionally biased toward polar residues: residues 431–440 and 447–462; these read LSPTKLPSIN and SQQQQTNSIRNYFQPS. At Ser-432 the chain carries Phosphoserine. A Glycyl lysine isopeptide (Lys-Gly) (interchain with G-Cter in ubiquitin) cross-link involves residue Lys-435. Residues 461-467 carry the Nuclear localization signal motif; the sequence is PSTKKRE. Phosphoserine is present on residues Ser-509 and Ser-518. Residues Lys-571 and Lys-582 each participate in a glycyl lysine isopeptide (Lys-Gly) (interchain with G-Cter in SUMO2) cross-link. Phosphoserine is present on residues Ser-615 and Ser-673. Glycyl lysine isopeptide (Lys-Gly) (interchain with G-Cter in ubiquitin) cross-links involve residues Lys-686, Lys-690, and Lys-735. A FxF/Y motif motif is present at residues 740 to 749; that stretch reads ADDLFRYNPY.

It belongs to the Nibrin family. Component of the MRN complex composed of two heterodimers RAD50 and MRE11 associated with a single NBN. The MRN complexes dimerize on DNA to form joined MRN-MRN oligomers required for DNA double-strand break repair. The MRN complexes dimerize on DNA to form joined MRN-MRN oligomers required for DNA double-strand break repair. As part of the MRN complex, interacts with MCM9; the interaction recruits the complex to DNA repair sites. Component of the BASC complex, at least composed of BRCA1, MSH2, MSH6, MLH1, ATM, BLM, RAD50, MRE11 and NBN. Interacts with histone H2AX; this requires phosphorylation of H2AX on 'Ser-139' and promotes NBN recruitment to DNA damage sites. Interacts with (phosphorylated) MDC1; promoting NBN recruitment to DNA damage sites. Interacts with (phosphorylated) RAD17; promoting NBN recruitment to DNA damage sites. Interacts (via FxF/Y motif) with ATM. Interacts with HJURP. Interacts with INTS3. Interacts with KPNA2. Interacts with TERF2; interaction is disrupted upon NBN phosphorylation by CDK2. Interacts with (phosphorylated) RBBP8/CtIP; the interaction links the role of the MRN complex in DNA double-strand break sensing to resection. Interacts with SP100; recruits NBN to PML bodies. Interacts with ATF2. Interacts with MTOR, MAPKAP1 isoform 2 and RICTOR; indicative for an association with the mTORC2 complex. Interacts with MRNIP. Interacts with UFL1; promoting UFL1 recruitment to double-strand breaks following DNA damage. Interacts with CYREN (via XLF motif). Post-translationally, phosphorylated by ATM in response of ionizing radiation, and such phosphorylation is responsible intra-S phase checkpoint control and telomere maintenance. Phosphorylated at Ser-432 by CDK2 in S/G2 phases abolishes interaction with TERF2, enabling DCLRE1B/Apollo recruitment to telomeres. Phosphorylation at Ser-432 in response to dysfunctional telomeres promotes non-homologous end joining repair at telomeres, while dephosphorylation by PPP1CA promotes microhomology-mediated end-joining (MMEJ) repair. Ubiquitinated at Lys-435 via 'Lys-6'-linked ubiquitin chains by RNF8, promoting NBN recruitment to DNA double-strand breaks (DSBs). Ubiquitinated at Lys-686 and Lys-689 via 'Lys-63'-linked ubiquitin chains by PELI1: ubiquitination takes place following PELI1 phosphorylation and promotes ATM activation and DNA repair. Ubiquitinated at Lys-735 via 'Lys-63'-linked ubiquitin chains by the SCF(SKP2) complex: ubiquitination takes place following SKP2 phosphorylation and promotes ATM activation and DNA repair. In terms of processing, lactylation at Lys-388 by KAT5 in response to DNA damage promotes recruitment of the MRN complex to DNA damage sites. Delactylated by HDAC3.

It localises to the nucleus. Its subcellular location is the chromosome. The protein localises to the PML body. The protein resides in the telomere. Its function is as follows. Component of the MRN complex, which plays a central role in double-strand break (DSB) repair, DNA recombination, maintenance of telomere integrity and meiosis. The MRN complex is involved in the repair of DNA double-strand breaks (DSBs) via homologous recombination (HR), an error-free mechanism which primarily occurs during S and G2 phases. The complex (1) mediates the end resection of damaged DNA, which generates proper single-stranded DNA, a key initial steps in HR, and is (2) required for the recruitment of other repair factors and efficient activation of ATM and ATR upon DNA damage. The MRN complex possesses single-strand endonuclease activity and double-strand-specific 3'-5' exonuclease activity, which are provided by MRE11, to initiate end resection, which is required for single-strand invasion and recombination. Within the MRN complex, NBN acts as a protein-protein adapter, which specifically recognizes and binds phosphorylated proteins, promoting their recruitment to DNA damage sites. Recruits MRE11 and RAD50 components of the MRN complex to DSBs in response to DNA damage. Promotes the recruitment of PI3/PI4-kinase family members ATM, ATR, and probably DNA-PKcs to the DNA damage sites, activating their functions. Mediates the recruitment of phosphorylated RBBP8/CtIP to DSBs, leading to cooperation between the MRN complex and RBBP8/CtIP to initiate end resection. RBBP8/CtIP specifically promotes the endonuclease activity of the MRN complex to clear DNA ends containing protein adducts. The MRN complex is also required for the processing of R-loops. NBN also functions in telomere length maintenance via its interaction with TERF2: interaction with TERF2 during G1 phase preventing recruitment of DCLRE1B/Apollo to telomeres. NBN also promotes DNA repair choice at dysfunctional telomeres: NBN phosphorylation by CK2 promotes non-homologous end joining repair at telomeres, while unphosphorylated NBN promotes microhomology-mediated end-joining (MMEJ) repair. Enhances AKT1 phosphorylation possibly by association with the mTORC2 complex. The chain is Nibrin (NBN) from Pongo abelii (Sumatran orangutan).